Consider the following 140-residue polypeptide: MLKTISPLISPELLKVLAEMGHGDEIIFSDAHFPAHSMGPQVIRADGLRVSDLLQAIIPLFELDSYAPPVVMMAAVEGDALDPTVEQRYRQALSTQAPCPDIVRIDRFAFYDRAQKAFAIVITGECAKYGNILLKKGVTP.

His-22 acts as the Proton donor in catalysis. Substrate contacts are provided by residues Asp-30, Arg-107, and 129 to 131; that span reads YGN.

It belongs to the RbsD / FucU family. FucU mutarotase subfamily. As to quaternary structure, homodecamer.

It localises to the cytoplasm. It carries out the reaction alpha-L-fucose = beta-L-fucose. It functions in the pathway carbohydrate metabolism; L-fucose metabolism. Involved in the anomeric conversion of L-fucose. The sequence is that of L-fucose mutarotase from Klebsiella pneumoniae subsp. pneumoniae (strain ATCC 700721 / MGH 78578).